We begin with the raw amino-acid sequence, 288 residues long: Homoserine kinase (288 aa).

79 to 89 (PLARGLGSSSS) serves as a coordination point for ATP.

It belongs to the GHMP kinase family. Homoserine kinase subfamily.

Its subcellular location is the cytoplasm. It catalyses the reaction L-homoserine + ATP = O-phospho-L-homoserine + ADP + H(+). The protein operates within amino-acid biosynthesis; L-threonine biosynthesis; L-threonine from L-aspartate: step 4/5. In terms of biological role, catalyzes the ATP-dependent phosphorylation of L-homoserine to L-homoserine phosphate. This chain is Homoserine kinase, found in Streptococcus sanguinis (strain SK36).